The sequence spans 997 residues: Mannuronan C5-epimerase AlgE2 (997 aa).

PbH1 repeat units follow at residues 133 to 155 (DRDV…DPHE), 157 to 179 (TINL…VADF), 180 to 202 (QIGG…NIVT), 204 to 226 (TNDF…VVQR), 257 to 279 (AHDV…RVYG), 280 to 315 (AEDV…GVSG), and 320 to 359 (TTGT…SVSN). Hemolysin-type calcium-binding repeat units lie at residues 388–403 (GTAG…AHET), 406–422 (GLDG…NDIL), 424–439 (GGAG…GADL), 557–573 (GHAG…DDIL), 574–591 (VGGA…ADVF), 696–711 (GSAG…ADEV), 713–730 (HGGG…ADVF), 828–839 (GGDGNDTLSGSS), 846–862 (GGVG…NDIL), and 864–880 (GGAG…SDIF).

It belongs to the D-mannuronate C5-epimerase family. Ca(2+) serves as cofactor.

It is found in the secreted. It catalyses the reaction [(1-&gt;4)-beta-D-mannuronosyl](n) = [alginate](n). The protein operates within glycan biosynthesis; alginate biosynthesis. Its activity is regulated as follows. Inhibited by zinc. Converts beta-D-mannuronic acid (M) to alpha-L-guluronic acid (G), producing a polymer with gel-forming capacity, required for the formation of the cyst coat. The sequence is that of Mannuronan C5-epimerase AlgE2 from Azotobacter vinelandii.